Reading from the N-terminus, the 500-residue chain is Chromosomal replication initiator protein DnaA (500 aa).

The segment at 1 to 81 (MVNASGDPVI…LQALRTVTGE (81 aa)) is domain I, interacts with DnaA modulators. The domain II stretch occupies residues 81-155 (ENMFPAFKVV…QQKMNRDPET (75 aa)). Residues 156–377 (HLNKNFTFDS…GALTRVTAVA (222 aa)) are domain III, AAA+ region. ATP-binding residues include G200, G202, K203, and T204. The interval 378 to 500 (SLSNQPVTRA…TVRLKQSNTN (123 aa)) is domain IV, binds dsDNA.

The protein belongs to the DnaA family. In terms of assembly, oligomerizes as a right-handed, spiral filament on DNA at oriC.

Its subcellular location is the cytoplasm. Its function is as follows. Plays an essential role in the initiation and regulation of chromosomal replication. ATP-DnaA binds to the origin of replication (oriC) to initiate formation of the DNA replication initiation complex once per cell cycle. Binds the DnaA box (a 9 base pair repeat at the origin) and separates the double-stranded (ds)DNA. Forms a right-handed helical filament on oriC DNA; dsDNA binds to the exterior of the filament while single-stranded (ss)DNA is stabiized in the filament's interior. The ATP-DnaA-oriC complex binds and stabilizes one strand of the AT-rich DNA unwinding element (DUE), permitting loading of DNA polymerase. After initiation quickly degrades to an ADP-DnaA complex that is not apt for DNA replication. Binds acidic phospholipids. The protein is Chromosomal replication initiator protein DnaA of Bifidobacterium longum subsp. infantis (strain ATCC 15697 / DSM 20088 / JCM 1222 / NCTC 11817 / S12).